Consider the following 361-residue polypeptide: Glutaminyl-peptide cyclotransferase (361 aa).

The N-terminal stretch at 1 to 28 (MAGGRHRRVVGTLHLLLLVAALPWASRG) is a signal peptide. Asn-49 carries an N-linked (GlcNAc...) asparagine glycan. A disulfide bridge links Cys-139 with Cys-164. Residue Asp-159 coordinates Zn(2+). Glu-201 functions as the Proton acceptor in the catalytic mechanism. Glu-202 serves as a coordination point for Zn(2+). The active-site Proton acceptor is the Asp-248. N-linked (GlcNAc...) asparagine glycosylation is present at Asn-296. His-330 is a Zn(2+) binding site.

It belongs to the glutaminyl-peptide cyclotransferase family.

Its subcellular location is the secreted. The catalysed reaction is N-terminal L-glutaminyl-[peptide] = N-terminal 5-oxo-L-prolyl-[peptide] + NH4(+). In terms of biological role, responsible for the biosynthesis of pyroglutamyl peptides. Has a bias against acidic and tryptophan residues adjacent to the N-terminal glutaminyl residue and a lack of importance of chain length after the second residue. Also catalyzes N-terminal pyroglutamate formation. In vitro, catalyzes pyroglutamate formation of N-terminally truncated form of APP amyloid-beta peptides [Glu-3]-amyloid-beta. May be involved in the N-terminal pyroglutamate formation of several amyloid-related plaque-forming peptides. The polypeptide is Glutaminyl-peptide cyclotransferase (QPCT) (Homo sapiens (Human)).